Here is a 252-residue protein sequence, read N- to C-terminus: Triosephosphate isomerase (252 aa).

9 to 11 (NWK) contributes to the substrate binding site. Residue His95 is the Electrophile of the active site. Glu167 serves as the catalytic Proton acceptor. Residues Gly173, Ser211, and 232–233 (GG) contribute to the substrate site.

This sequence belongs to the triosephosphate isomerase family. As to quaternary structure, homodimer.

Its subcellular location is the cytoplasm. The enzyme catalyses D-glyceraldehyde 3-phosphate = dihydroxyacetone phosphate. Its pathway is carbohydrate biosynthesis; gluconeogenesis. The protein operates within carbohydrate degradation; glycolysis; D-glyceraldehyde 3-phosphate from glycerone phosphate: step 1/1. Involved in the gluconeogenesis. Catalyzes stereospecifically the conversion of dihydroxyacetone phosphate (DHAP) to D-glyceraldehyde-3-phosphate (G3P). This chain is Triosephosphate isomerase, found in Marinobacter nauticus (strain ATCC 700491 / DSM 11845 / VT8) (Marinobacter aquaeolei).